A 313-amino-acid polypeptide reads, in one-letter code: Homoserine O-succinyltransferase (313 aa).

The Acyl-thioester intermediate role is filled by C142. The substrate site is built by K163 and S192. The active-site Proton acceptor is the H235. The active site involves E237. R249 contributes to the substrate binding site.

This sequence belongs to the MetA family.

It localises to the cytoplasm. The enzyme catalyses L-homoserine + succinyl-CoA = O-succinyl-L-homoserine + CoA. It functions in the pathway amino-acid biosynthesis; L-methionine biosynthesis via de novo pathway; O-succinyl-L-homoserine from L-homoserine: step 1/1. Its function is as follows. Transfers a succinyl group from succinyl-CoA to L-homoserine, forming succinyl-L-homoserine. The polypeptide is Homoserine O-succinyltransferase (Aliivibrio fischeri (strain MJ11) (Vibrio fischeri)).